The following is a 411-amino-acid chain: ATP-dependent RNA helicase eIF4A (411 aa).

A disordered region spans residues 1–23 (MSKPEDTSAAAAAPAGEAGNNLN). The span at 9–19 (AAAAAPAGEAG) shows a compositional bias: low complexity. The Q motif motif lies at 38 to 66 (DNFDNMELKEELLRGVYAYGFERPSAIQA). Positions 69–239 (IVPVIKGHDV…KKFMRDPIRI (171 aa)) constitute a Helicase ATP-binding domain. ATP is bound at residue 82-89 (AQSGTGKT). The DEAD box signature appears at 187–190 (DEAD). Residues 250–411 (GIKQFYVAVE…EMPLNVADLI (162 aa)) form the Helicase C-terminal domain.

This sequence belongs to the DEAD box helicase family. eIF4A subfamily. As to quaternary structure, component of the eIF4F complex, which composition varies with external and internal environmental conditions. It is composed of at least eIF4A, eIF4E and eIF4G.

It localises to the cytoplasm. The enzyme catalyses ATP + H2O = ADP + phosphate + H(+). ATP-dependent RNA helicase which is a subunit of the eIF4F complex involved in cap recognition and is required for mRNA binding to ribosome. In the current model of translation initiation, eIF4A unwinds RNA secondary structures in the 5'-UTR of mRNAs which is necessary to allow efficient binding of the small ribosomal subunit, and subsequent scanning for the initiator codon. In Mycosarcoma maydis (Corn smut fungus), this protein is ATP-dependent RNA helicase eIF4A (TIF1).